A 193-amino-acid polypeptide reads, in one-letter code: Dihydrofolate reductase (193 aa).

Residues 1-193 enclose the DHFR domain; it reads MIKLVFRYSP…VTTLTESVYK (193 aa). NADP(+) is bound by residues Arg7, 22-27, 52-55, and 73-77; these read FGLGDG, GAKT, and DLARD.

Belongs to the dihydrofolate reductase family.

It catalyses the reaction (6S)-5,6,7,8-tetrahydrofolate + NADP(+) = 7,8-dihydrofolate + NADPH + H(+). It functions in the pathway cofactor biosynthesis; tetrahydrofolate biosynthesis; 5,6,7,8-tetrahydrofolate from 7,8-dihydrofolate: step 1/1. Functionally, key enzyme in folate metabolism. Catalyzes an essential reaction for de novo glycine and purine synthesis, and for DNA precursor synthesis. The chain is Dihydrofolate reductase (frd) from Escherichia coli (Bacteriophage T4).